A 65-amino-acid polypeptide reads, in one-letter code: MLIGQKVRIKYSKSKIANDIAVRVGDIGVIRGIKFINNQCVTIIVEFENHTRLWMFREELIYLNK.

It is found in the plastid. The protein localises to the chloroplast. This is an uncharacterized protein from Porphyra purpurea (Red seaweed).